A 446-amino-acid polypeptide reads, in one-letter code: MAQLTALDAGFLKSRDPERHPGLAIGAVAVVNGAAPSYDQLKTVLTERIKSIPRCTQVLATEWIDYPGFDLTQHVRRVALPRPGDEAELFRAIALALERPLDPDRPLWECWIIEGLNGNRWAILIKIHHCMAGAMSAAHLLARLCDDADGSAFANNVDIKQIPPYGDARSWAETLWRMSVSIAGAVCTAAARAVSWPAVTSPAGPVTTRRRYQAVRVPRDAVDAVCHKFGVTANDVALAAITEGFRTVLLHRGQQPRADSLRTLEKTDGSSAMLPYLPVEYDDPVRRLRTVHNRSQQSGRRQPDSLSDYTPLMLCAKMIHALARLPQQGIVTLATSAPRPRHQLRLMGQKMDQVLPIPPTALQLSTGIAVLSYGDELVFGITADYDAASEMQQLVNGIELGVARLVALSDDSVLLFTKDRRKRSSRALPSAARRGRPSVPTARARH.

Residue H129 is the Proton acceptor of the active site. Residues S425–H446 form a disordered region.

This sequence belongs to the long-chain O-acyltransferase family.

The catalysed reaction is an acyl-CoA + a 1,2-diacyl-sn-glycerol = a triacyl-sn-glycerol + CoA. It catalyses the reaction di-(9Z)-octadecenoylglycerol + (9Z)-octadecenoyl-CoA = 1,2,3-tri-(9Z-octadecenoyl)-glycerol + CoA. It functions in the pathway glycerolipid metabolism; triacylglycerol biosynthesis. In terms of biological role, catalyzes the terminal and only committed step in triacylglycerol synthesis by using diacylglycerol and fatty acyl CoA as substrates. Required for storage lipid synthesis. Functionally, upon expression in E.coli functions weakly as a triacylglycerol synthase, making triacylglycerol (TG) from diolein and long-chain fatty acyl-CoA. Has no wax synthase activity to produce wax esters. This chain is Putative diacyglycerol O-acyltransferase Rv3371, found in Mycobacterium tuberculosis (strain ATCC 25618 / H37Rv).